The primary structure comprises 536 residues: Probable galacturonosyltransferase 10 (536 aa).

At 1-16 the chain is on the cytoplasmic side; that stretch reads MRRRGGDSFRRAGRRK. The chain crosses the membrane as a helical; Signal-anchor for type II membrane protein span at residues 17–37; it reads ISNVVWWVLSGIALLLFFLIL. Topologically, residues 38–536 are lumenal; sequence SKAGHIEPRP…SPFMQQCNFH (499 aa). Asn64, Asn246, Asn300, Asn403, and Asn436 each carry an N-linked (GlcNAc...) asparagine glycan.

This sequence belongs to the glycosyltransferase 8 family. In terms of tissue distribution, expressed in roots, inflorescences, siliques, leaves and stems.

Its subcellular location is the golgi apparatus membrane. It functions in the pathway glycan metabolism; pectin biosynthesis. May be involved in pectin and/or xylans biosynthesis in cell walls. The sequence is that of Probable galacturonosyltransferase 10 (GAUT10) from Arabidopsis thaliana (Mouse-ear cress).